The following is a 163-amino-acid chain: Small ribosomal subunit protein uS3m (163 aa).

A mitochondrion-targeting transit peptide spans 1–31 (MAASLIRQTKLLSVFSSAGCFRSIHSTAACL).

This sequence belongs to the universal ribosomal protein uS3 family. In terms of assembly, component of the mitochondrial ribosome small subunit (28S) which comprises a 12S rRNA and about 30 distinct proteins.

The protein resides in the mitochondrion. The chain is Small ribosomal subunit protein uS3m (mrps24) from Danio rerio (Zebrafish).